Reading from the N-terminus, the 95-residue chain is Small ribosomal subunit protein bS20 (95 aa).

It belongs to the bacterial ribosomal protein bS20 family.

Its function is as follows. Binds directly to 16S ribosomal RNA. The protein is Small ribosomal subunit protein bS20 of Ehrlichia canis (strain Jake).